The chain runs to 489 residues: Ketol-acid reductoisomerase (NADP(+)) (489 aa).

The 192-residue stretch at 16 to 207 folds into the KARI N-terminal Rossmann domain; sequence LRKCKLVEKN…GSHRAGVLHS (192 aa). NADP(+)-binding positions include 44-47, Arg67, Ser77, and 107-109; these read CGSQ and DKQ. His131 is a catalytic residue. An NADP(+)-binding site is contributed by Gly157. KARI C-terminal knotted domains lie at 208–343 and 344–483; these read SFIA…KCKI and CHKE…MVDM. Mg(2+) contacts are provided by Asp216, Glu220, Glu388, and Glu392. Ser413 is a substrate binding site.

This sequence belongs to the ketol-acid reductoisomerase family. Mg(2+) serves as cofactor.

It carries out the reaction (2R)-2,3-dihydroxy-3-methylbutanoate + NADP(+) = (2S)-2-acetolactate + NADPH + H(+). The catalysed reaction is (2R,3R)-2,3-dihydroxy-3-methylpentanoate + NADP(+) = (S)-2-ethyl-2-hydroxy-3-oxobutanoate + NADPH + H(+). It participates in amino-acid biosynthesis; L-isoleucine biosynthesis; L-isoleucine from 2-oxobutanoate: step 2/4. The protein operates within amino-acid biosynthesis; L-valine biosynthesis; L-valine from pyruvate: step 2/4. In terms of biological role, involved in the biosynthesis of branched-chain amino acids (BCAA). Catalyzes an alkyl-migration followed by a ketol-acid reduction of (S)-2-acetolactate (S2AL) to yield (R)-2,3-dihydroxy-isovalerate. In the isomerase reaction, S2AL is rearranged via a Mg-dependent methyl migration to produce 3-hydroxy-3-methyl-2-ketobutyrate (HMKB). In the reductase reaction, this 2-ketoacid undergoes a metal-dependent reduction by NADPH to yield (R)-2,3-dihydroxy-isovalerate. This is Ketol-acid reductoisomerase (NADP(+)) from Buchnera aphidicola subsp. Schlechtendalia chinensis.